The chain runs to 339 residues: Protein RecA (339 aa).

ATP is bound at residue 73-80 (GPESSGKT).

Belongs to the RecA family.

It is found in the cytoplasm. Functionally, can catalyze the hydrolysis of ATP in the presence of single-stranded DNA, the ATP-dependent uptake of single-stranded DNA by duplex DNA, and the ATP-dependent hybridization of homologous single-stranded DNAs. It interacts with LexA causing its activation and leading to its autocatalytic cleavage. The sequence is that of Protein RecA from Mycoplasmopsis pulmonis (strain UAB CTIP) (Mycoplasma pulmonis).